The sequence spans 130 residues: Small ribosomal subunit protein uS8 (130 aa).

Belongs to the universal ribosomal protein uS8 family. Part of the 30S ribosomal subunit. Contacts proteins S5 and S12.

One of the primary rRNA binding proteins, it binds directly to 16S rRNA central domain where it helps coordinate assembly of the platform of the 30S subunit. The sequence is that of Small ribosomal subunit protein uS8 from Pectobacterium atrosepticum (strain SCRI 1043 / ATCC BAA-672) (Erwinia carotovora subsp. atroseptica).